The primary structure comprises 348 residues: Dihydroorotase (348 aa).

Residues His17 and His19 each coordinate Zn(2+). Residues 19–21 (HLR) and Asn45 contribute to the substrate site. Zn(2+) is bound by residues Lys103, His140, and His178. Position 103 is an N6-carboxylysine (Lys103). His140 contacts substrate. Substrate is bound at residue Leu223. Asp251 is a binding site for Zn(2+). Asp251 is an active-site residue. The substrate site is built by His255 and Ala267.

This sequence belongs to the metallo-dependent hydrolases superfamily. DHOase family. Class II DHOase subfamily. In terms of assembly, homodimer. Zn(2+) is required as a cofactor.

The enzyme catalyses (S)-dihydroorotate + H2O = N-carbamoyl-L-aspartate + H(+). The protein operates within pyrimidine metabolism; UMP biosynthesis via de novo pathway; (S)-dihydroorotate from bicarbonate: step 3/3. In terms of biological role, catalyzes the reversible cyclization of carbamoyl aspartate to dihydroorotate. The chain is Dihydroorotase from Shigella flexneri serotype 5b (strain 8401).